Consider the following 359-residue polypeptide: Zinc finger CCCH domain-containing protein 20 (359 aa).

3 consecutive C3H1-type zinc fingers follow at residues 75 to 107, 119 to 145, and 153 to 177; these read TCDHFRMYEFKVRRCARGRSHDWTECPYAHPGE, YSGTACPEFRKGCCKRGDACEFSHGVF, and RYRTQPCKDGGNCRRRVCFFAHSPD. Disordered regions lie at residues 207–226 and 334–359; these read SISPSSNSPPVSPRGDSDSS and MGRIEPDPDQGAGDTPDVGWVSDLVM.

This chain is Zinc finger CCCH domain-containing protein 20, found in Arabidopsis thaliana (Mouse-ear cress).